The following is a 141-amino-acid chain: Large ribosomal subunit protein uL11 (141 aa).

The protein belongs to the universal ribosomal protein uL11 family. Part of the ribosomal stalk of the 50S ribosomal subunit. Interacts with L10 and the large rRNA to form the base of the stalk. L10 forms an elongated spine to which L12 dimers bind in a sequential fashion forming a multimeric L10(L12)X complex. One or more lysine residues are methylated.

Its function is as follows. Forms part of the ribosomal stalk which helps the ribosome interact with GTP-bound translation factors. This chain is Large ribosomal subunit protein uL11, found in Gloeobacter violaceus (strain ATCC 29082 / PCC 7421).